Consider the following 125-residue polypeptide: Evasin P672 (125 aa).

An N-terminal signal peptide occupies residues 1-21 (MAHKIAIGLVCVLYALHIMSA). N-linked (GlcNAc...) asparagine glycosylation is found at N35, N55, N65, N72, N78, N104, N112, and N118. Disulfide bonds link C70–C110, C87–C115, and C105–C124.

It is found in the secreted. Salivary chemokine-binding protein which has chemokine-neutralizing activity and binds to host chemokines CCL1, CCL2, CCL3, CCL3L1, CCL7, CCL8, CCL11, CCL12, CCL13, CCL14, CCL15, CCL16, CCL18 and CCL23. Binds to CCL8 with 1:1 stoichiometry and disrupts CCL8 homodimer formation. The protein is Evasin P672 of Rhipicephalus pulchellus (Yellow backed tick).